A 383-amino-acid chain; its full sequence is NAD(P) transhydrogenase subunit alpha part 1 (383 aa).

NAD(+) contacts are provided by residues 131 to 134 (QNMD), Val181, 201 to 203 (DVR), and Gly231.

Belongs to the AlaDH/PNT family. Heterotrimer of two alpha chains and a beta (PntB) chain; in Rickettsia, the alpha chain is made of two subunits (PntAA and PntAB) and forms a dimer.

It catalyses the reaction NAD(+) + NADPH + H(+)(in) = NADH + NADP(+) + H(+)(out). In terms of biological role, the transhydrogenation between NADH and NADP is coupled to respiration and ATP hydrolysis and functions as a proton pump across the membrane. The polypeptide is NAD(P) transhydrogenase subunit alpha part 1 (pntAA) (Rickettsia prowazekii (strain Madrid E)).